Reading from the N-terminus, the 205-residue chain is Protein PYRAB00100 (205 aa).

The region spanning 7–201 (EWGEFLVRLA…EEYPRGPVRR (195 aa)) is the AMMECR1 domain.

The polypeptide is Protein PYRAB00100 (Pyrococcus abyssi (strain GE5 / Orsay)).